Reading from the N-terminus, the 654-residue chain is MDLHTAVYNAAHDGKLLLLQKLLAGRGREEIEELLGEVAGGGTPLLIAARRGHLDVVEYLVDNCGASVEASGSVHFDGETIEGAPPLWAASAAGHLAVVRSLLRRGASVNRTTRTNSTPLRAACFDGHLDVVRYLVGEHKADLEVANRHGHTCLMISCYKGHREIARYLLERGAQVNRRSAKGNTALHDCAESGSLEILQLLLGCHARMERDGYGMTPLLAASVTGHTNIVEYLIQEQPGHGQLSGTELPGEGSSQMAGNHCSTPEEAEPYESCCPTSREAAVEALELLGATYVDKKRDLLGALKHWRRAMELRHQGGDYLPKPEPQQLVLAYDYSREVSTPQELEALITDPDEMRMQALLIRERILGPSHPDTSYYIRYRGAVYADSGNFERCIRLWKYALDMQQNNLEPLSPMTASSFLSFAELFSYVLQDRSAKGNLGMQLGFADLMGVLSKGVREVERALQLPKEPGDSAQFTKAIAIILHLLYLLEKVECTPSQEHLKHQTVYRLLKCAPRGKNGFTPLHMAVDKETTNVGRYRVGIFPSLQVVKVLLDCGADPDSRDFDNNTPLHVAAQNNCPAIMDALIEAGAHMDATNAFKKTAYELLDSKLLAKSTMQPFNYVTLQCLAARALDRNKVPYKGFIPEELEAFIQLH.

ANK repeat units lie at residues 2–31 (DLHTAVYNAAHDGKLLLLQKLLAGRGREEI), 40–70 (GGGTPLLIAARRGHLDVVEYLVDNCGASVEA), 82–111 (EGAPPLWAASAAGHLAVVRSLLRRGASVNR), 115–145 (TNSTPLRAACFDGHLDVVRYLVGEHKADLEV), 149–178 (HGHTCLMISCYKGHREIARYLLERGAQVNR), 182–211 (KGNTALHDCAESGSLEILQLLLGCHARMER), and 214–243 (YGMTPLLAASVTGHTNIVEYLIQEQPGHGQ). The residue at position 108 (S108) is a Phosphoserine. The disordered stretch occupies residues 241–265 (HGQLSGTELPGEGSSQMAGNHCSTP). Positions 253 to 263 (GSSQMAGNHCS) are enriched in polar residues. TPR repeat units follow at residues 283–317 (VEALELLGATYVDKKRDLLGALKHWRRAMELRHQG) and 375–408 (SYYIRYRGAVYADSGNFERCIRLWKYALDMQQNN). ANK repeat units follow at residues 519–561 (NGFT…DPDS) and 565–594 (DNNTPLHVAAQNNCPAIMDALIEAGAHMDA). A Phosphoserine modification is found at S608.

This sequence belongs to the fem-1 family. As to quaternary structure, component of a CRL2 E3 ubiquitin-protein ligase complex, also named ECS (Elongin BC-CUL2/5-SOCS-box protein) complex, composed of CUL2, Elongin BC (ELOB and ELOC), RBX1 and substrate-specific adapter FEM1A. Interacts with PTGER4. Interacts with NFKB1; the interaction is direct. Phosphorylated; highly phosphorylated in myoblasts and myotubes. Phosphorylation at Ser-108 and Ser-608 promote PGE2-EP4-mediated inhibition of inflammation. Dephosphorylated by protein phosphatase 2A (PP2A).

The protein resides in the mitochondrion. The protein localises to the cytoplasm. It participates in protein modification; protein ubiquitination. Its function is as follows. Substrate-recognition component of a Cul2-RING (CRL2) E3 ubiquitin-protein ligase complex of the DesCEND (destruction via C-end degrons) pathway, which recognizes a C-degron located at the extreme C terminus of target proteins, leading to their ubiquitination and degradation. The C-degron recognized by the DesCEND pathway is usually a motif of less than ten residues and can be present in full-length proteins, truncated proteins or proteolytically cleaved forms. The CRL2(FEM1A) complex specifically recognizes proteins with an arginine at the C-terminus: recognizes and binds proteins ending with -Lys/Arg-Xaa-Arg and -Lys/Arg-Xaa-Xaa-Arg C-degrons, such as SIL1 or OR51B2, leading to their ubiquitination and degradation. Involved in PGE2-EP4-mediated inhibition of inflammation of macrophages via interaction with NFKB1 and PTGER4. Promotes inflammation in brain microglia through MAP2K4/MKK4-mediated signaling. This is Protein fem-1 homolog A from Rattus norvegicus (Rat).